We begin with the raw amino-acid sequence, 126 residues long: uncharacterized protein (126 aa).

The chain crosses the membrane as a helical span at residues 55–77 (MLLINSNLVLSGLLLFIDVYRAA).

It is found in the membrane. This is an uncharacterized protein from Dictyostelium discoideum (Social amoeba).